Reading from the N-terminus, the 27-residue chain is Ranatuerin-2Cb (27 aa).

A disulfide bridge connects residues C20 and C25.

As to expression, expressed by the skin glands.

Its subcellular location is the secreted. Antibacterial activity against Gram-positive bacterium S.aureus (MIC=40 uM) and Gram-negative bacterium E.coli (MIC=2 uM). Has activity against C.albicans (MIC=46 uM). This is Ranatuerin-2Cb from Lithobates clamitans (Green frog).